Reading from the N-terminus, the 91-residue chain is Small ribosomal subunit protein uS19 (91 aa).

The protein belongs to the universal ribosomal protein uS19 family.

Protein S19 forms a complex with S13 that binds strongly to the 16S ribosomal RNA. This is Small ribosomal subunit protein uS19 from Cupriavidus taiwanensis (strain DSM 17343 / BCRC 17206 / CCUG 44338 / CIP 107171 / LMG 19424 / R1) (Ralstonia taiwanensis (strain LMG 19424)).